Here is a 101-residue protein sequence, read N- to C-terminus: Small ribosomal subunit protein uS14 (101 aa).

Residues 1–21 (MAKTSSVEKNNRRRKLADQYG) form a disordered region.

It belongs to the universal ribosomal protein uS14 family. As to quaternary structure, part of the 30S ribosomal subunit. Contacts proteins S3 and S10.

In terms of biological role, binds 16S rRNA, required for the assembly of 30S particles and may also be responsible for determining the conformation of the 16S rRNA at the A site. This chain is Small ribosomal subunit protein uS14, found in Mesorhizobium japonicum (strain LMG 29417 / CECT 9101 / MAFF 303099) (Mesorhizobium loti (strain MAFF 303099)).